Consider the following 417-residue polypeptide: Serine hydroxymethyltransferase (417 aa).

(6S)-5,6,7,8-tetrahydrofolate-binding positions include Leu-121 and 125-127 (GHL). Lys-229 carries the N6-(pyridoxal phosphate)lysine modification. 354 to 356 (SPF) provides a ligand contact to (6S)-5,6,7,8-tetrahydrofolate.

This sequence belongs to the SHMT family. As to quaternary structure, homodimer. The cofactor is pyridoxal 5'-phosphate.

The protein resides in the cytoplasm. It catalyses the reaction (6R)-5,10-methylene-5,6,7,8-tetrahydrofolate + glycine + H2O = (6S)-5,6,7,8-tetrahydrofolate + L-serine. It participates in one-carbon metabolism; tetrahydrofolate interconversion. The protein operates within amino-acid biosynthesis; glycine biosynthesis; glycine from L-serine: step 1/1. Catalyzes the reversible interconversion of serine and glycine with tetrahydrofolate (THF) serving as the one-carbon carrier. This reaction serves as the major source of one-carbon groups required for the biosynthesis of purines, thymidylate, methionine, and other important biomolecules. Also exhibits THF-independent aldolase activity toward beta-hydroxyamino acids, producing glycine and aldehydes, via a retro-aldol mechanism. In Dichelobacter nodosus (strain VCS1703A), this protein is Serine hydroxymethyltransferase.